The chain runs to 429 residues: 3-phosphoshikimate 1-carboxyvinyltransferase (429 aa).

The 3-phosphoshikimate site is built by K23, S24, and R28. K23 is a phosphoenolpyruvate binding site. Positions 95 and 123 each coordinate phosphoenolpyruvate. Positions 168, 170, 316, and 343 each coordinate 3-phosphoshikimate. Q170 lines the phosphoenolpyruvate pocket. D316 (proton acceptor) is an active-site residue. R347 and R389 together coordinate phosphoenolpyruvate.

Belongs to the EPSP synthase family. In terms of assembly, monomer.

It is found in the cytoplasm. The catalysed reaction is 3-phosphoshikimate + phosphoenolpyruvate = 5-O-(1-carboxyvinyl)-3-phosphoshikimate + phosphate. The protein operates within metabolic intermediate biosynthesis; chorismate biosynthesis; chorismate from D-erythrose 4-phosphate and phosphoenolpyruvate: step 6/7. Functionally, catalyzes the transfer of the enolpyruvyl moiety of phosphoenolpyruvate (PEP) to the 5-hydroxyl of shikimate-3-phosphate (S3P) to produce enolpyruvyl shikimate-3-phosphate and inorganic phosphate. This is 3-phosphoshikimate 1-carboxyvinyltransferase from Bacillus cereus (strain G9842).